We begin with the raw amino-acid sequence, 349 residues long: N-acetyl-gamma-glutamyl-phosphate reductase (349 aa).

Cys-149 is a catalytic residue.

It belongs to the NAGSA dehydrogenase family. Type 1 subfamily.

The protein resides in the cytoplasm. The catalysed reaction is N-acetyl-L-glutamate 5-semialdehyde + phosphate + NADP(+) = N-acetyl-L-glutamyl 5-phosphate + NADPH + H(+). The protein operates within amino-acid biosynthesis; L-arginine biosynthesis; N(2)-acetyl-L-ornithine from L-glutamate: step 3/4. Its function is as follows. Catalyzes the NADPH-dependent reduction of N-acetyl-5-glutamyl phosphate to yield N-acetyl-L-glutamate 5-semialdehyde. The chain is N-acetyl-gamma-glutamyl-phosphate reductase from Acinetobacter baumannii (strain SDF).